The primary structure comprises 110 residues: UPF0122 protein spr1167 (110 aa).

It belongs to the UPF0122 family.

Might take part in the signal recognition particle (SRP) pathway. This is inferred from the conservation of its genetic proximity to ftsY/ffh. May be a regulatory protein. This chain is UPF0122 protein spr1167, found in Streptococcus pneumoniae (strain ATCC BAA-255 / R6).